The following is a 234-amino-acid chain: Glucosamine-6-phosphate deaminase (234 aa).

Aspartate 62 acts as the Proton acceptor; for enolization step in catalysis. Residue asparagine 128 is the For ring-opening step of the active site. The active-site Proton acceptor; for ring-opening step is histidine 130. Catalysis depends on glutamate 135, which acts as the For ring-opening step.

It belongs to the glucosamine/galactosamine-6-phosphate isomerase family. NagB subfamily.

It carries out the reaction alpha-D-glucosamine 6-phosphate + H2O = beta-D-fructose 6-phosphate + NH4(+). Its pathway is amino-sugar metabolism; N-acetylneuraminate degradation; D-fructose 6-phosphate from N-acetylneuraminate: step 5/5. Catalyzes the reversible isomerization-deamination of glucosamine 6-phosphate (GlcN6P) to form fructose 6-phosphate (Fru6P) and ammonium ion. The chain is Glucosamine-6-phosphate deaminase from Streptococcus equi subsp. zooepidemicus (strain H70).